A 401-amino-acid polypeptide reads, in one-letter code: Adaptive-response sensory kinase SasA (401 aa).

The Histidine kinase domain maps to 175–400; it reads MLVHDLRNPL…WFHFTLPVYP (226 aa). A Phosphohistidine; by autocatalysis modification is found at His178.

Homooligomerizes. Interacts with KaiC. Participates in the KaiABC clock complex, whose core is composed of a KaiC homohexamer, 6 KaiB and up to 6 KaiA dimers. SasA and KaiB(fs) compete to bind to KaiC.

The catalysed reaction is ATP + protein L-histidine = ADP + protein N-phospho-L-histidine.. In terms of biological role, member of the two-component regulatory system SasA/RpaA involved in genome-wide circadian gene expression. One of several clock output pathways. Participates in the Kai clock protein complex, the main circadian regulator in cyanobacteria, via its interaction with KaiC. KaiC enhances the autophosphorylation activity of SasA, which then transfers its phosphate group to RpaA to activate it. In addition to its output function, recruits fold-shifted KaiB (KaiB(fs)) to KaiC to cooperatively form the KaiB(6):KaiC(6) complex (independent of SasA kinase activity). Required for robustness of the circadian rhythm of gene expression and is involved in clock output, also required for adaptation to light/dark cycles. The sequence is that of Adaptive-response sensory kinase SasA from Nostoc sp. (strain PCC 7120 / SAG 25.82 / UTEX 2576).